A 278-amino-acid polypeptide reads, in one-letter code: 3-methyl-2-oxobutanoate hydroxymethyltransferase (278 aa).

Asp-49 and Asp-88 together coordinate Mg(2+). 3-methyl-2-oxobutanoate contacts are provided by residues 49–50 (DS), Asp-88, and Lys-118. Glu-120 is a Mg(2+) binding site. The active-site Proton acceptor is the Glu-186.

Belongs to the PanB family. In terms of assembly, homodecamer; pentamer of dimers. Mg(2+) serves as cofactor.

The protein resides in the cytoplasm. The enzyme catalyses 3-methyl-2-oxobutanoate + (6R)-5,10-methylene-5,6,7,8-tetrahydrofolate + H2O = 2-dehydropantoate + (6S)-5,6,7,8-tetrahydrofolate. It functions in the pathway cofactor biosynthesis; (R)-pantothenate biosynthesis; (R)-pantoate from 3-methyl-2-oxobutanoate: step 1/2. Functionally, catalyzes the reversible reaction in which hydroxymethyl group from 5,10-methylenetetrahydrofolate is transferred onto alpha-ketoisovalerate to form ketopantoate. In Bordetella parapertussis (strain 12822 / ATCC BAA-587 / NCTC 13253), this protein is 3-methyl-2-oxobutanoate hydroxymethyltransferase.